Reading from the N-terminus, the 474-residue chain is Bifunctional protein HldE (474 aa).

The interval 1 to 318 (MKLSMPRFDQ…RAIQREEGSE (318 aa)) is ribokinase. Residue 194–197 (NLSE) participates in ATP binding. Residue Asp263 is part of the active site. The tract at residues 343-474 (FTNGCFDILH…AIVEKIRGQG (132 aa)) is cytidylyltransferase.

In the N-terminal section; belongs to the carbohydrate kinase PfkB family. It in the C-terminal section; belongs to the cytidylyltransferase family. Homodimer.

The enzyme catalyses D-glycero-beta-D-manno-heptose 7-phosphate + ATP = D-glycero-beta-D-manno-heptose 1,7-bisphosphate + ADP + H(+). It catalyses the reaction D-glycero-beta-D-manno-heptose 1-phosphate + ATP + H(+) = ADP-D-glycero-beta-D-manno-heptose + diphosphate. It participates in nucleotide-sugar biosynthesis; ADP-L-glycero-beta-D-manno-heptose biosynthesis; ADP-L-glycero-beta-D-manno-heptose from D-glycero-beta-D-manno-heptose 7-phosphate: step 1/4. Its pathway is nucleotide-sugar biosynthesis; ADP-L-glycero-beta-D-manno-heptose biosynthesis; ADP-L-glycero-beta-D-manno-heptose from D-glycero-beta-D-manno-heptose 7-phosphate: step 3/4. Its function is as follows. Catalyzes the phosphorylation of D-glycero-D-manno-heptose 7-phosphate at the C-1 position to selectively form D-glycero-beta-D-manno-heptose-1,7-bisphosphate. Catalyzes the ADP transfer from ATP to D-glycero-beta-D-manno-heptose 1-phosphate, yielding ADP-D-glycero-beta-D-manno-heptose. This Pseudomonas syringae pv. tomato (strain ATCC BAA-871 / DC3000) protein is Bifunctional protein HldE.